The primary structure comprises 402 residues: Multidrug resistance protein MdtH (402 aa).

11 consecutive transmembrane segments (helical) span residues 13–33, 45–65, 99–116, 139–159, 165–185, 214–234, 244–264, 277–297, 300–322, 340–360, and 368–388; these read YFLLIDNMLVVLGFFVVFPLI, ALMVGIALGLRQFIQQGLGIF, PWLLWFSCFLSGLGGTLF, LLMMQDSAGAVTGALLGSWLL, LVCATGAVLFVLCAAFNAWLL, VLTLAGYYMLAVQVMLMLPIM, AVKWMYAIEACLSLTLLYPIA, LMAGLLLMSLSMLPVGLVGNL, LFTLICTFYIGSVIAEPARETLS, LGLAIGGAIGYIGGGWLFDMG, and LPWMMLGVIGIMTFLALGWQF.

This sequence belongs to the major facilitator superfamily. DHA1 family. MdtH (TC 2.A.1.2.21) subfamily.

It localises to the cell inner membrane. The chain is Multidrug resistance protein MdtH from Citrobacter koseri (strain ATCC BAA-895 / CDC 4225-83 / SGSC4696).